Consider the following 311-residue polypeptide: 4-hydroxy-tetrahydrodipicolinate synthase (311 aa).

Thr51 provides a ligand contact to pyruvate. The active-site Proton donor/acceptor is Tyr140. Lys168 serves as the catalytic Schiff-base intermediate with substrate. Ile209 is a binding site for pyruvate.

The protein belongs to the DapA family. Homotetramer; dimer of dimers.

The protein resides in the cytoplasm. It catalyses the reaction L-aspartate 4-semialdehyde + pyruvate = (2S,4S)-4-hydroxy-2,3,4,5-tetrahydrodipicolinate + H2O + H(+). It participates in amino-acid biosynthesis; L-lysine biosynthesis via DAP pathway; (S)-tetrahydrodipicolinate from L-aspartate: step 3/4. Functionally, catalyzes the condensation of (S)-aspartate-beta-semialdehyde [(S)-ASA] and pyruvate to 4-hydroxy-tetrahydrodipicolinate (HTPA). The protein is 4-hydroxy-tetrahydrodipicolinate synthase of Streptococcus pneumoniae (strain Hungary19A-6).